A 256-amino-acid chain; its full sequence is UPF0280 protein MTH_727 (256 aa).

Belongs to the UPF0280 family.

The sequence is that of UPF0280 protein MTH_727 from Methanothermobacter thermautotrophicus (strain ATCC 29096 / DSM 1053 / JCM 10044 / NBRC 100330 / Delta H) (Methanobacterium thermoautotrophicum).